We begin with the raw amino-acid sequence, 128 residues long: Calcitonin gene-related peptide 1 (128 aa).

A signal peptide spans 1-25; it reads MGFQKFSPFLALSILVLLQAGSLHA. The propeptide occupies 26 to 80; the sequence is APFRSALESSPADPATLSEDEARLLLAALVQDYVQMKASELEQEQEREGSRIIAQ. Residues C84 and C89 are joined by a disulfide bond. Residue F119 is modified to Phenylalanine amide. Positions 125–128 are excised as a propeptide; it reads DLQA.

It belongs to the calcitonin family. Expressed in spinal cord.

The protein localises to the secreted. In terms of biological role, CGRP1/CALCA is a peptide hormone that induces vasodilation mediated by the CALCRL-RAMP1 receptor complex. Dilates a variety of vessels including the coronary, cerebral and systemic vasculature. Its abundance in the CNS also points toward a neurotransmitter or neuromodulator role. It also elevates platelet cAMP. CGRP1 can also bind and activate CALCR-RAMP1 (AMYR1) receptor complex. In Homo sapiens (Human), this protein is Calcitonin gene-related peptide 1.